Here is a 364-residue protein sequence, read N- to C-terminus: F-box/kelch-repeat protein At3g23880 (364 aa).

The region spanning 8–54 is the F-box domain; that stretch reads MFSPHNLPLEMMEEILLRLPVKSLTRFKCVCSSWRSLISETLFALKH. Kelch repeat units lie at residues 169–215 and 216–265; these read DYKV…SRSG and IYIN…TLGD.

This chain is F-box/kelch-repeat protein At3g23880, found in Arabidopsis thaliana (Mouse-ear cress).